The following is a 336-amino-acid chain: DNA-directed RNA polymerase subunit alpha (336 aa).

The alpha N-terminal domain (alpha-NTD) stretch occupies residues 1 to 232; it reads MIQKNWQELI…DQLGVFVNFD (232 aa). Residues 248 to 336 are alpha C-terminal domain (alpha-CTD); sequence FNPALLKKVD…DLAKRYEDQY (89 aa).

Belongs to the RNA polymerase alpha chain family. Homodimer. The RNAP catalytic core consists of 2 alpha, 1 beta, 1 beta' and 1 omega subunit. When a sigma factor is associated with the core the holoenzyme is formed, which can initiate transcription.

The enzyme catalyses RNA(n) + a ribonucleoside 5'-triphosphate = RNA(n+1) + diphosphate. Functionally, DNA-dependent RNA polymerase catalyzes the transcription of DNA into RNA using the four ribonucleoside triphosphates as substrates. This Rhizobium etli (strain CIAT 652) protein is DNA-directed RNA polymerase subunit alpha.